Here is a 247-residue protein sequence, read N- to C-terminus: tRNA uridine(34) hydroxylase (247 aa).

The Rhodanese domain occupies 124 to 218; it reads TKQNVILIDT…YLEDTHNKNN (95 aa). Cys-178 functions as the Cysteine persulfide intermediate in the catalytic mechanism.

It belongs to the TrhO family.

The enzyme catalyses uridine(34) in tRNA + AH2 + O2 = 5-hydroxyuridine(34) in tRNA + A + H2O. Catalyzes oxygen-dependent 5-hydroxyuridine (ho5U) modification at position 34 in tRNAs. The sequence is that of tRNA uridine(34) hydroxylase from Rickettsia prowazekii (strain Madrid E).